The sequence spans 341 residues: Mytilin-2 (341 aa).

Positions 1–24 (MFKQSYQLCLVFLLFVCFYQSVKG) are cleaved as a signal peptide.

Component of the organic matrix of calcified shell layers like nacre and prisms.

Its subcellular location is the secreted. This Mytilus californianus (California mussel) protein is Mytilin-2.